A 174-amino-acid polypeptide reads, in one-letter code: Peptide deformylase (174 aa).

Fe cation contacts are provided by Cys98 and His140. Glu141 is a catalytic residue. His144 lines the Fe cation pocket.

Belongs to the polypeptide deformylase family. Requires Fe(2+) as cofactor.

It carries out the reaction N-terminal N-formyl-L-methionyl-[peptide] + H2O = N-terminal L-methionyl-[peptide] + formate. Its function is as follows. Removes the formyl group from the N-terminal Met of newly synthesized proteins. Requires at least a dipeptide for an efficient rate of reaction. N-terminal L-methionine is a prerequisite for activity but the enzyme has broad specificity at other positions. The protein is Peptide deformylase of Bradyrhizobium diazoefficiens (strain JCM 10833 / BCRC 13528 / IAM 13628 / NBRC 14792 / USDA 110).